Reading from the N-terminus, the 207-residue chain is Cytochrome c oxidase subunit 3 (207 aa).

5 consecutive transmembrane segments (helical) span residues 30-50 (FWLF…TFLA), 67-87 (VTLV…SVYA), 101-121 (LWLG…IYEF), 144-164 (LVGT…TLMI), and 186-206 (WHFI…MGMV).

Belongs to the cytochrome c oxidase subunit 3 family.

It is found in the cell membrane. It catalyses the reaction 4 Fe(II)-[cytochrome c] + O2 + 8 H(+)(in) = 4 Fe(III)-[cytochrome c] + 2 H2O + 4 H(+)(out). The chain is Cytochrome c oxidase subunit 3 (ctaE) from Bacillus subtilis (strain 168).